Reading from the N-terminus, the 503-residue chain is Aspartyl/glutamyl-tRNA(Asn/Gln) amidotransferase subunit B (503 aa).

The protein belongs to the GatB/GatE family. GatB subfamily. As to quaternary structure, heterotrimer of A, B and C subunits.

It catalyses the reaction L-glutamyl-tRNA(Gln) + L-glutamine + ATP + H2O = L-glutaminyl-tRNA(Gln) + L-glutamate + ADP + phosphate + H(+). The catalysed reaction is L-aspartyl-tRNA(Asn) + L-glutamine + ATP + H2O = L-asparaginyl-tRNA(Asn) + L-glutamate + ADP + phosphate + 2 H(+). Functionally, allows the formation of correctly charged Asn-tRNA(Asn) or Gln-tRNA(Gln) through the transamidation of misacylated Asp-tRNA(Asn) or Glu-tRNA(Gln) in organisms which lack either or both of asparaginyl-tRNA or glutaminyl-tRNA synthetases. The reaction takes place in the presence of glutamine and ATP through an activated phospho-Asp-tRNA(Asn) or phospho-Glu-tRNA(Gln). This Nocardia farcinica (strain IFM 10152) protein is Aspartyl/glutamyl-tRNA(Asn/Gln) amidotransferase subunit B.